Consider the following 229-residue polypeptide: General odorant-binding protein 69 (229 aa).

Residues 1–20 (MDRLLLVLLSSASLLLTVYG) form the signal peptide. Cys66 and Cys106 are oxidised to a cystine.

It belongs to the PBP/GOBP family.

Its subcellular location is the secreted. Functionally, present in the aqueous fluid surrounding olfactory sensory dendrites and are thought to aid in the capture and transport of hydrophobic odorants into and through this fluid. The polypeptide is General odorant-binding protein 69 (Obp69) (Anopheles gambiae (African malaria mosquito)).